The primary structure comprises 1498 residues: Golgin subfamily A member 3 (1498 aa).

Met-1 carries the post-translational modification N-acetylmethionine. A disordered region spans residues 1-118 (MDGASAEQDG…GTSAEGSVRK (118 aa)). The residue at position 18 (Ser-18) is a Phosphoserine. Positions 27–36 (PLKPPGPLVP) are enriched in pro residues. The residue at position 57 (Ser-57) is a Phosphoserine. A compositionally biased stretch (pro residues) spans 71–81 (PTPPFPDPPSS). The interaction with GOPC stretch occupies residues 121–141 (LQSLRLSLPMQETQLCSTDSP). 2 disordered regions span residues 166-195 (RVKRQQERSSQPATKTRLFSTLDPELMLNP) and 216-325 (SVPR…SAST). Residues 172–257 (ERSSQPATKT…DYRTEDSNAG (86 aa)) are golgi-targeting domain. Polar residues-rich tracts occupy residues 173-184 (RSSQPATKTRLF) and 269-291 (TKGSLKQNRSSAASVVSEISLSP). Ser-272 carries the post-translational modification Phosphoserine. Residues 315–324 (SDSSSYSSAS) are compositionally biased toward low complexity. Ser-385, Ser-389, and Ser-465 each carry phosphoserine. The stretch at 394–1459 (VSLESSAAET…ALTVHESLSS (1066 aa)) forms a coiled coil. Over residues 789-801 (KEELDRGARRLEE) the composition is skewed to basic and acidic residues. Disordered regions lie at residues 789–809 (KEELDRGARRLEEGTEETSET), 974–993 (QKQKMRRLGSDLTSAQKEMK), 1376–1400 (RGAAKTRKEPKGEASSSNPATPIKI), and 1440–1498 (DSLQ…GPGE). A Phosphoserine modification is found at Ser-983. The span at 1376–1387 (RGAAKTRKEPKG) shows a compositional bias: basic and acidic residues. The residue at position 1392 (Ser-1392) is a Phosphoserine. Residues 1440–1452 (DSLQRQMEEHALT) are compositionally biased toward basic and acidic residues.

Homodimer. Interacts with GOLGA7. Isoform 1 interacts with GOPC while isoform 3 does not. Cleaved by caspases in apoptotic cells. In terms of tissue distribution, expressed in all tissues tested. Expressed in liver, testis, lung, heart, salivary gland and kidney.

The protein localises to the cytoplasm. Its subcellular location is the golgi apparatus. It localises to the golgi stack membrane. Functionally, golgi auto-antigen; probably involved in maintaining Golgi structure. The polypeptide is Golgin subfamily A member 3 (GOLGA3) (Homo sapiens (Human)).